We begin with the raw amino-acid sequence, 607 residues long: V-type proton ATPase catalytic subunit A (607 aa).

246 to 253 (GAFGCGKT) contributes to the ATP binding site.

This sequence belongs to the ATPase alpha/beta chains family. V-ATPase is a heteromultimeric enzyme composed of a peripheral catalytic V1 complex (components A to H) attached to an integral membrane V0 proton pore complex (components: a, c, c', c'', d, e, f and VOA1).

The protein localises to the vacuole membrane. It catalyses the reaction ATP + H2O + 4 H(+)(in) = ADP + phosphate + 5 H(+)(out). In terms of biological role, catalytic subunit of the V1 complex of vacuolar(H+)-ATPase (V-ATPase), a multisubunit enzyme composed of a peripheral complex (V1) that hydrolyzes ATP and a membrane integral complex (V0) that translocates protons. V-ATPase is responsible for acidifying and maintaining the pH of intracellular compartments. In Neurospora crassa (strain ATCC 24698 / 74-OR23-1A / CBS 708.71 / DSM 1257 / FGSC 987), this protein is V-type proton ATPase catalytic subunit A (vma-1).